A 360-amino-acid polypeptide reads, in one-letter code: Ferredoxin--NADP reductase 1 (360 aa).

FAD is bound by residues D43, Q51, Y56, A96, F141, D307, and S348.

This sequence belongs to the ferredoxin--NADP reductase type 2 family. In terms of assembly, homodimer. The cofactor is FAD.

The enzyme catalyses 2 reduced [2Fe-2S]-[ferredoxin] + NADP(+) + H(+) = 2 oxidized [2Fe-2S]-[ferredoxin] + NADPH. The chain is Ferredoxin--NADP reductase 1 from Cupriavidus taiwanensis (strain DSM 17343 / BCRC 17206 / CCUG 44338 / CIP 107171 / LMG 19424 / R1) (Ralstonia taiwanensis (strain LMG 19424)).